Here is an 862-residue protein sequence, read N- to C-terminus: Protein PRQFV-amide (862 aa).

Residues 1 to 20 (MSSQLLICSVFVLFTFGPNS) form the signal peptide. Positions 21–79 (FPSCLAQEQAGNSDATQLSADAKAPESAKDKSGDVQNDGTKSVRSKRDLEIDFGSGDVQ) are excised as a propeptide. The disordered stretch occupies residues 32 to 68 (NSDATQLSADAKAPESAKDKSGDVQNDGTKSVRSKRD). Residues 43–53 (KAPESAKDKSG) are compositionally biased toward basic and acidic residues. Valine amide is present on V86. The propeptide occupies 90-149 (AAPPVFQTPLVQDKISGFIPSETESPVIGEFAFPGSVFMDDEEALGAEEEPMDDEDLEFY). Valine amide is present on V156. Residues 160 to 175 (GIDDYLLQEKLKDFIE) constitute a propeptide that is removed on maturation. Residues V182, V190, V198, V206, V214, V222, V230, V238, and V246 each carry the valine amide modification. Positions 250 to 259 (EADPSFLFED) are excised as a propeptide. V266 carries the post-translational modification Valine amide. Residues 270 to 300 (SLDFLGGANWYNPYDVTMEPQSEGSDLQGFS) constitute a propeptide that is removed on maturation. V307 carries the valine amide modification. A propeptide spanning residues 311-319 (DAFDMFEFS) is cleaved from the precursor. At V326 the chain carries Valine amide. A propeptide spanning residues 330–338 (DQDEMFDFS) is cleaved from the precursor. Position 345 is a valine amide (V345). The propeptide occupies 349 to 357 (DLQEFFDLS). Valine amide is present on V364. A propeptide spanning residues 368-376 (EFDDEIDFS) is cleaved from the precursor. A Valine amide modification is found at V383. Positions 387–395 (ENDDDFDLS) are excised as a propeptide. V402 is modified (valine amide). Residues 406 to 414 (ENDDEFDLS) constitute a propeptide that is removed on maturation. V421 is subject to Valine amide. The span at 424–434 (RENDDELEFSK) shows a compositional bias: basic and acidic residues. Positions 424–528 (RENDDELEFS…NNDDLDFSKR (105 aa)) are disordered. Positions 425-433 (ENDDELEFS) are excised as a propeptide. V440 is subject to Valine amide. A compositionally biased stretch (basic and acidic residues) spans 441-452 (GKREDDEIDFSK). A propeptide spanning residues 444–451 (EDDEIDFS) is cleaved from the precursor. Valine amide is present on V458. A compositionally biased stretch (basic and acidic residues) spans 459–471 (GKRENDGEIDFSK). A propeptide spanning residues 462-470 (ENDGEIDFS) is cleaved from the precursor. V477 carries the post-translational modification Valine amide. Residues 478 to 490 (GKRENDDEIDFSK) are compositionally biased toward basic and acidic residues. The propeptide occupies 481–489 (ENDDEIDFS). V496 bears the Valine amide mark. Basic and acidic residues predominate over residues 497-508 (GKREDGEIDFSK). Residues 500 to 507 (EDGEIDFS) constitute a propeptide that is removed on maturation. V514 is subject to Valine amide. Residues 515-527 (GKRENNDDLDFSK) are compositionally biased toward basic and acidic residues. A propeptide spanning residues 518–526 (ENNDDLDFS) is cleaved from the precursor. V533 is subject to Valine amide. The propeptide occupies 537–545 (EVDDEIDFS). Residues 549–634 (RQFVGKREND…RQFVGKREND (86 aa)) form a disordered region. Valine amide is present on V552. Residues 553–565 (GKRENDDDLDFSK) show a composition bias toward basic and acidic residues. Residues 556–564 (ENDDDLDFS) constitute a propeptide that is removed on maturation. V571 bears the Valine amide mark. Residues 572–584 (GKRENDDDLEFSK) show a composition bias toward basic and acidic residues. Residues 575–583 (ENDDDLEFS) constitute a propeptide that is removed on maturation. Valine amide is present on V590. A propeptide spanning residues 594–602 (ENDPLLDFS) is cleaved from the precursor. A Valine amide modification is found at V609. Basic and acidic residues predominate over residues 610–622 (GKRENDDDLDFSK). The propeptide occupies 613–621 (ENDDDLDFS). The residue at position 628 (V628) is a Valine amide. A propeptide spanning residues 632–640 (ENDPLIDFS) is cleaved from the precursor. At V647 the chain carries Valine amide. A propeptide spanning residues 651–659 (ESDGDFELS) is cleaved from the precursor. Residue V666 is modified to Valine amide. Positions 670-677 (DVDGPGLS) are excised as a propeptide. V684 carries the valine amide modification. The propeptide occupies 688 to 695 (EDYDIDFA). Residue V702 is modified to Valine amide. Residues 706–714 (GNEDEFEMS) constitute a propeptide that is removed on maturation. V721 carries the post-translational modification Valine amide. Residues 724–757 (RNFEELDQDFLRHMHDILDKRIPQFVSLPSLTAA) constitute a propeptide that is removed on maturation. At V764 the chain carries Valine amide. Positions 768-812 (SDAAFLETLRHLRDYVGGQDEQNVSEFSYQHPYPSDLNDVGLIQQ) are excised as a propeptide. Position 819 is a valine amide (V819). Positions 823–862 (GGDVDDINTTYRLGDFVSQPMSFVEEPSWLCRQLNAFGIS) are excised as a propeptide.

Expressed abundantly in the abdominal ganglion, much less in the pedal and cerebral ganglia, and rarely in the buccal and pleural ganglia.

The protein resides in the secreted. PRQFV-amide may act as a modulator within the feeding system as well as in other systems of Aplysia. This chain is Protein PRQFV-amide, found in Aplysia californica (California sea hare).